Reading from the N-terminus, the 640-residue chain is 1,4-alpha-glucan branching enzyme GlgB (640 aa).

D317 serves as the catalytic Nucleophile. Residue E370 is the Proton donor of the active site.

The protein belongs to the glycosyl hydrolase 13 family. GlgB subfamily. As to quaternary structure, monomer.

The catalysed reaction is Transfers a segment of a (1-&gt;4)-alpha-D-glucan chain to a primary hydroxy group in a similar glucan chain.. It participates in glycan biosynthesis; glycogen biosynthesis. Functionally, catalyzes the formation of the alpha-1,6-glucosidic linkages in glycogen by scission of a 1,4-alpha-linked oligosaccharide from growing alpha-1,4-glucan chains and the subsequent attachment of the oligosaccharide to the alpha-1,6 position. This chain is 1,4-alpha-glucan branching enzyme GlgB, found in Nitratidesulfovibrio vulgaris (strain ATCC 29579 / DSM 644 / CCUG 34227 / NCIMB 8303 / VKM B-1760 / Hildenborough) (Desulfovibrio vulgaris).